We begin with the raw amino-acid sequence, 834 residues long: ABC transporter A family member 11 (834 aa).

Helical transmembrane passes span 35 to 55 (FFIL…ILNN), 188 to 208 (MPMI…ILIV), 235 to 255 (VFDY…LYSF), 269 to 289 (FLLF…LQFI), 297 to 319 (NKWL…SVAF), 324 to 346 (PLIV…LKAL), and 355 to 375 (SYTI…IYFI). The ABC transporter domain maps to 452–693 (LDKPSIIERC…YGSGYTIDII (242 aa)). 495–502 (GPNGSGKS) lines the ATP pocket. A compositionally biased stretch (polar residues) spans 779–789 (KQQTNNKSNII). Residues 779–834 (KQQTNNKSNIINNNNNNNNNNNNNNNNNNNNNNNNNNNNNNNNNTNNNTNNNQLIN) are disordered. The span at 790 to 834 (NNNNNNNNNNNNNNNNNNNNNNNNNNNNNNNNNTNNNTNNNQLIN) shows a compositional bias: low complexity.

This sequence belongs to the ABC transporter superfamily. ABCA family.

Its subcellular location is the membrane. The sequence is that of ABC transporter A family member 11 (abcA11) from Dictyostelium discoideum (Social amoeba).